Here is a 665-residue protein sequence, read N- to C-terminus: Adenylate cyclase 1 (665 aa).

A disordered region spans residues 1–25 (MLQRSESGFKDIESMQDSNADKPSR). A compositionally biased stretch (basic and acidic residues) spans 7 to 24 (SGFKDIESMQDSNADKPS). The next 2 membrane-spanning stretches (helical) occupy residues 33-53 (SLLG…LVGL) and 373-393 (AVSG…AHLI). The region spanning 394–444 (TKSLNQLTDSANRLQDLDFATPIDVSSHVAEISTLNGAMNRARDAIFTFAL) is the HAMP domain. Positions 471-603 (TAMFTDIYDF…DTVNVASRLE (133 aa)) constitute a Guanylate cyclase domain. 2 residues coordinate Mg(2+): Asp-476 and Asp-520.

The protein belongs to the adenylyl cyclase class-3 family. Mg(2+) is required as a cofactor.

The protein localises to the cell membrane. It catalyses the reaction ATP = 3',5'-cyclic AMP + diphosphate. Its function is as follows. Plays essential roles in regulation of cellular metabolism by catalyzing the synthesis of a second messenger, cAMP. This chain is Adenylate cyclase 1 (cya1), found in Rhizobium meliloti (strain 1021) (Ensifer meliloti).